The primary structure comprises 329 residues: DNA-directed RNA polymerase subunit alpha (329 aa).

The interval 1 to 234 (MQGSVTEFLK…EQLDAFVELR (234 aa)) is alpha N-terminal domain (alpha-NTD). The interval 248–329 (FDPILLRPVD…WPPASLADDL (82 aa)) is alpha C-terminal domain (alpha-CTD).

This sequence belongs to the RNA polymerase alpha chain family. In terms of assembly, homodimer. The RNAP catalytic core consists of 2 alpha, 1 beta, 1 beta' and 1 omega subunit. When a sigma factor is associated with the core the holoenzyme is formed, which can initiate transcription.

It catalyses the reaction RNA(n) + a ribonucleoside 5'-triphosphate = RNA(n+1) + diphosphate. Functionally, DNA-dependent RNA polymerase catalyzes the transcription of DNA into RNA using the four ribonucleoside triphosphates as substrates. The protein is DNA-directed RNA polymerase subunit alpha of Shewanella putrefaciens (strain CN-32 / ATCC BAA-453).